A 434-amino-acid chain; its full sequence is Probable proline transporter 2 (434 aa).

Helical transmembrane passes span 26 to 46 (PWYQVGFVLTTGVNSAYVLGY), 49 to 69 (SVMVPLGWIGGTCGLILAAAI), 106 to 126 (LTWALQYVNLFMINTGFIILA), 149 to 169 (IALSGFVCALFAFGIPYLSAL), 171 to 191 (IWLGFSTFFSLIYITIAFVLS), 213 to 233 (IFTTIGAVANLVFAYNTGMLP), 251 to 271 (LWFQFTVGSLPLYAVTFMGYW), 297 to 317 (LSAFLQTVIALHIFASPMYEF), 339 to 359 (VGVRGGYLTVNTLVAAMLPFL), 362 to 382 (FMSLTGALSTFPLTFVLANHM), and 403 to 423 (VAGFSLLSIAAAVAALRLIMV).

Belongs to the amino acid/polyamine transporter 2 family. Amino acid/auxin permease (AAAP) (TC 2.A.18.3) subfamily.

The protein resides in the cell membrane. In terms of biological role, proline transporter that mediates proline transport across the plasma membrane. The protein is Probable proline transporter 2 of Oryza sativa subsp. japonica (Rice).